The primary structure comprises 117 residues: Large ribosomal subunit protein uL18 (117 aa).

Belongs to the universal ribosomal protein uL18 family. In terms of assembly, part of the 50S ribosomal subunit; part of the 5S rRNA/L5/L18/L25 subcomplex. Contacts the 5S and 23S rRNAs.

In terms of biological role, this is one of the proteins that bind and probably mediate the attachment of the 5S RNA into the large ribosomal subunit, where it forms part of the central protuberance. The chain is Large ribosomal subunit protein uL18 from Mycoplasma mobile (strain ATCC 43663 / 163K / NCTC 11711) (Mesomycoplasma mobile).